The following is a 630-amino-acid chain: Replication protein A 70 kDa DNA-binding subunit B (630 aa).

The segment at residues I200 to T282 is a DNA-binding region (OB). The C4-type zinc finger occupies C496 to C516.

Belongs to the replication factor A protein 1 family. As to quaternary structure, heterotrimer of RPA1, RPA2 and RPA3 (canonical replication protein A complex). Interacts with RPA2A. Expressed in root tips, roots, shoot apical meristem (SAM) and young leaves, and at lower levels in mature leaves, flag leaves and ears.

Its subcellular location is the nucleus. In terms of biological role, component of the replication protein A complex (RPA) required for DNA recombination, repair and replication. The activity of RPA is mediated by single-stranded DNA binding and protein interactions. Probably involved in repair of double-strand DNA breaks (DSBs) induced by genotoxic stresses. The chain is Replication protein A 70 kDa DNA-binding subunit B (RPA1B) from Oryza sativa subsp. japonica (Rice).